The following is a 360-amino-acid chain: Peptide chain release factor 1 (360 aa).

The residue at position 235 (Q235) is an N5-methylglutamine. The segment covering 281-307 (ERQRADSERSADRRNQVGSGDRSERIR) has biased composition (basic and acidic residues). The interval 281–310 (ERQRADSERSADRRNQVGSGDRSERIRTYN) is disordered.

This sequence belongs to the prokaryotic/mitochondrial release factor family. Post-translationally, methylated by PrmC. Methylation increases the termination efficiency of RF1.

Its subcellular location is the cytoplasm. Peptide chain release factor 1 directs the termination of translation in response to the peptide chain termination codons UAG and UAA. In Sinorhizobium medicae (strain WSM419) (Ensifer medicae), this protein is Peptide chain release factor 1.